We begin with the raw amino-acid sequence, 277 residues long: Collectin-10 (277 aa).

A signal peptide spans 1–27; sequence MNGFASLLRRNQFILLVLFLLQIQSLG. The interval 40–107 is disordered; that stretch reads ATHTISPGPK…GDKGEKGLLG (68 aa). The segment covering 49 to 64 has biased composition (basic and acidic residues); the sequence is KGDDGEKGDPGEEGKH. The Collagen-like domain occupies 53 to 112; the sequence is GEKGDPGEEGKHGKVGRMGPKGIKGELGDMGDQGNIGKTGPIGKKGDKGEKGLLGIPGEK. The C-type lectin domain maps to 155–271; sequence TEEKFYYIVQ…CHLTMYFVCE (117 aa). 2 disulfides stabilise this stretch: C176–C270 and C248–C262. A glycan (N-linked (GlcNAc...) asparagine) is linked at N258.

It belongs to the COLEC10/COLEC11 family. Highly expressed in liver, placenta and adrenal gland. Moderately expressed in small intestine, lung, stomach and prostate. Weakly expressed in trachea and spleen.

It localises to the secreted. It is found in the golgi apparatus. The protein resides in the cytoplasm. Functionally, lectin that binds to various sugars: galactose &gt; mannose = fucose &gt; N-acetylglucosamine &gt; N-acetylgalactosamine. Acts as a chemoattractant, probably involved in the regulation of cell migration. The sequence is that of Collectin-10 (COLEC10) from Homo sapiens (Human).